A 203-amino-acid chain; its full sequence is ATP-dependent Clp protease proteolytic subunit 1 (203 aa).

Ser103 serves as the catalytic Nucleophile. His128 is a catalytic residue.

The protein belongs to the peptidase S14 family. In terms of assembly, fourteen ClpP subunits assemble into 2 heptameric rings which stack back to back to give a disk-like structure with a central cavity, resembling the structure of eukaryotic proteasomes.

It localises to the cytoplasm. The catalysed reaction is Hydrolysis of proteins to small peptides in the presence of ATP and magnesium. alpha-casein is the usual test substrate. In the absence of ATP, only oligopeptides shorter than five residues are hydrolyzed (such as succinyl-Leu-Tyr-|-NHMec, and Leu-Tyr-Leu-|-Tyr-Trp, in which cleavage of the -Tyr-|-Leu- and -Tyr-|-Trp bonds also occurs).. In terms of biological role, cleaves peptides in various proteins in a process that requires ATP hydrolysis. Has a chymotrypsin-like activity. Plays a major role in the degradation of misfolded proteins. The protein is ATP-dependent Clp protease proteolytic subunit 1 of Treponema pallidum (strain Nichols).